The following is a 247-amino-acid chain: MSGHNKWSTIKHKKGAADAKRGKIFTKLIKEITVAAKLGGGDPEGNPRLRTAIDKAKGENMPKDNIERAIKKGTGGMDGVVYEETTYEGYGPGGAAVLVEVMTDNRNRTVSDVRSIFTKCNGNMGESGCVSWMFDKKGLMVFPKSVDFDKLFEAAIEAGAEDVSDEEEQIEVTTDPVSFMEVRDTLEKAGFKPESAEVTMIPQTMVKLEGKQAENMLKLMDRMEDNDDVQNVYANFDISEEEMDKMM.

The protein belongs to the TACO1 family.

Its subcellular location is the cytoplasm. This chain is Probable transcriptional regulatory protein Gura_1416, found in Geotalea uraniireducens (strain Rf4) (Geobacter uraniireducens).